The chain runs to 300 residues: tRNA pseudouridine synthase B (300 aa).

Asp-44 acts as the Nucleophile in catalysis.

This sequence belongs to the pseudouridine synthase TruB family. Type 1 subfamily.

It catalyses the reaction uridine(55) in tRNA = pseudouridine(55) in tRNA. In terms of biological role, responsible for synthesis of pseudouridine from uracil-55 in the psi GC loop of transfer RNAs. The protein is tRNA pseudouridine synthase B of Corynebacterium diphtheriae (strain ATCC 700971 / NCTC 13129 / Biotype gravis).